A 326-amino-acid polypeptide reads, in one-letter code: Metal-binding protein YtgA (326 aa).

The N-terminal stretch at 1–21 (MSFFHTRKYKLILRGLLCLAG) is a signal peptide. 4 residues coordinate Fe(2+): H75, H141, H207, and D299.

It belongs to the bacterial solute-binding protein 9 family. As to quaternary structure, monomer.

The protein localises to the periplasm. In terms of biological role, part of the ATP-binding cassette (ABC) transport system YtgABCD involved in metal import. Binds Fe(2+), Mn(2+) and Ni(2+), with a preference for Fe(2+) and delivers them to the membrane permease for translocation into the cytoplasm. The polypeptide is Metal-binding protein YtgA (Chlamydia trachomatis serovar D (strain ATCC VR-885 / DSM 19411 / UW-3/Cx)).